The sequence spans 791 residues: Endonuclease MutS2 (791 aa).

337–344 (GPNTGGKT) lines the ATP pocket. The tract at residues 689-715 (AAQASQKKPEKSVRSSRGLRSSRASSE) is disordered. Residues 703–713 (SSRGLRSSRAS) are compositionally biased toward low complexity. The Smr domain occupies 716–791 (LDLRGQRYEE…GTGATIVNLQ (76 aa)).

Belongs to the DNA mismatch repair MutS family. MutS2 subfamily. In terms of assembly, homodimer. Binds to stalled ribosomes, contacting rRNA.

In terms of biological role, endonuclease that is involved in the suppression of homologous recombination and thus may have a key role in the control of bacterial genetic diversity. Functionally, acts as a ribosome collision sensor, splitting the ribosome into its 2 subunits. Detects stalled/collided 70S ribosomes which it binds and splits by an ATP-hydrolysis driven conformational change. Acts upstream of the ribosome quality control system (RQC), a ribosome-associated complex that mediates the extraction of incompletely synthesized nascent chains from stalled ribosomes and their subsequent degradation. Probably generates substrates for RQC. This Lactobacillus gasseri (strain ATCC 33323 / DSM 20243 / BCRC 14619 / CIP 102991 / JCM 1131 / KCTC 3163 / NCIMB 11718 / NCTC 13722 / AM63) protein is Endonuclease MutS2.